Reading from the N-terminus, the 608-residue chain is DNA mismatch repair protein MutL (608 aa).

This sequence belongs to the DNA mismatch repair MutL/HexB family.

Its function is as follows. This protein is involved in the repair of mismatches in DNA. It is required for dam-dependent methyl-directed DNA mismatch repair. May act as a 'molecular matchmaker', a protein that promotes the formation of a stable complex between two or more DNA-binding proteins in an ATP-dependent manner without itself being part of a final effector complex. This is DNA mismatch repair protein MutL from Elusimicrobium minutum (strain Pei191).